Here is a 194-residue protein sequence, read N- to C-terminus: MTAIQLIVGLGNPGPEYEQTRHNAGALFVERIASAQRVSLTADKKYFGLTAKFSHQGNDVRLLIPTTYMNRSGQSVAALANFFRIKPEAILVAHDELDLPPGVAKLKRGGGHGGHNGLRDIIAQLGNQNDFHRLRLGIGHPGDAKLVSNFVLGRAPRAEQEKLDASIDFALGVLPDVLAGDFAKAMRELHSQKA.

Tyrosine 17 serves as a coordination point for tRNA. Histidine 22 acts as the Proton acceptor in catalysis. TRNA contacts are provided by tyrosine 68, asparagine 70, and asparagine 116.

The protein belongs to the PTH family. As to quaternary structure, monomer.

Its subcellular location is the cytoplasm. It carries out the reaction an N-acyl-L-alpha-aminoacyl-tRNA + H2O = an N-acyl-L-amino acid + a tRNA + H(+). Functionally, hydrolyzes ribosome-free peptidyl-tRNAs (with 1 or more amino acids incorporated), which drop off the ribosome during protein synthesis, or as a result of ribosome stalling. Catalyzes the release of premature peptidyl moieties from peptidyl-tRNA molecules trapped in stalled 50S ribosomal subunits, and thus maintains levels of free tRNAs and 50S ribosomes. The sequence is that of Peptidyl-tRNA hydrolase from Pseudomonas putida (strain GB-1).